Here is a 217-residue protein sequence, read N- to C-terminus: Probable GTP-binding protein EngB (217 aa).

The EngB-type G domain maps to 37–214 (AGIEVAFAGR…RAAMIRLLDE (178 aa)). GTP-binding positions include 45 to 52 (GRSNVGKS), 72 to 76 (GRTQE), 92 to 95 (DMPG), 159 to 162 (TKAD), and 193 to 195 (TSS). Mg(2+) contacts are provided by Ser52 and Thr74.

The protein belongs to the TRAFAC class TrmE-Era-EngA-EngB-Septin-like GTPase superfamily. EngB GTPase family. It depends on Mg(2+) as a cofactor.

Necessary for normal cell division and for the maintenance of normal septation. The chain is Probable GTP-binding protein EngB from Rhodopseudomonas palustris (strain BisB5).